Reading from the N-terminus, the 477-residue chain is tRNA-2-methylthio-N(6)-dimethylallyladenosine synthase (477 aa).

The region spanning 3 to 120 is the MTTase N-terminal domain; it reads KKLFIKTWGC…LPEMINQIKG (118 aa). Residues Cys-12, Cys-49, Cys-83, Cys-157, Cys-161, and Cys-164 each contribute to the [4Fe-4S] cluster site. The 233-residue stretch at 143–375 folds into the Radical SAM core domain; the sequence is KAEGPTAFVS…QNRITQQALR (233 aa). The region spanning 378-441 is the TRAM domain; that stretch reads RNMIDSEQRV…ANSLRGDVLR (64 aa).

Belongs to the methylthiotransferase family. MiaB subfamily. Monomer. [4Fe-4S] cluster is required as a cofactor.

The protein localises to the cytoplasm. The enzyme catalyses N(6)-dimethylallyladenosine(37) in tRNA + (sulfur carrier)-SH + AH2 + 2 S-adenosyl-L-methionine = 2-methylsulfanyl-N(6)-dimethylallyladenosine(37) in tRNA + (sulfur carrier)-H + 5'-deoxyadenosine + L-methionine + A + S-adenosyl-L-homocysteine + 2 H(+). Functionally, catalyzes the methylthiolation of N6-(dimethylallyl)adenosine (i(6)A), leading to the formation of 2-methylthio-N6-(dimethylallyl)adenosine (ms(2)i(6)A) at position 37 in tRNAs that read codons beginning with uridine. The polypeptide is tRNA-2-methylthio-N(6)-dimethylallyladenosine synthase (Pseudoalteromonas atlantica (strain T6c / ATCC BAA-1087)).